The primary structure comprises 905 residues: Heme/hemopexin-binding protein (905 aa).

Positions 1-21 (MYKLNVISLIILTTYTGATYA) are cleaved as a signal peptide.

It localises to the secreted. Its function is as follows. Binds heme/hemopexin complexes. This chain is Heme/hemopexin-binding protein (hxuA), found in Haemophilus influenzae (strain ATCC 51907 / DSM 11121 / KW20 / Rd).